Here is a 167-residue protein sequence, read N- to C-terminus: Glutathione peroxidase 1 (167 aa).

Residue Cys-41 is part of the active site.

It belongs to the glutathione peroxidase family.

The enzyme catalyses 2 glutathione + H2O2 = glutathione disulfide + 2 H2O. In terms of biological role, may constitute a glutathione peroxidase-like protective system against oxidative stresses. In Helianthus annuus (Common sunflower), this protein is Glutathione peroxidase 1 (GPXHA-1).